The sequence spans 280 residues: Undecaprenyl-diphosphatase (280 aa).

The next 8 membrane-spanning stretches (helical) occupy residues 19–39 (FLPV…PFSG), 44–64 (FDDL…LFLY), 89–109 (FYFL…GFIA), 125–145 (ILAS…WFFQ), 156–176 (VGFR…IPGV), 197–217 (AEFS…YKLI), 226–246 (VTIP…TLVI), and 259–279 (GVFG…TKFI).

The protein belongs to the UppP family.

It is found in the cell inner membrane. It catalyses the reaction di-trans,octa-cis-undecaprenyl diphosphate + H2O = di-trans,octa-cis-undecaprenyl phosphate + phosphate + H(+). Functionally, catalyzes the dephosphorylation of undecaprenyl diphosphate (UPP). Confers resistance to bacitracin. The chain is Undecaprenyl-diphosphatase from Leptospira borgpetersenii serovar Hardjo-bovis (strain L550).